The following is a 347-amino-acid chain: Putative adhesin P1-like protein MPN_099 (347 aa).

A compositionally biased stretch (polar residues) spans 282–300 (FGTDHSTQPQPQSLKTTTP). The disordered stretch occupies residues 282–302 (FGTDHSTQPQPQSLKTTTPVF).

It belongs to the adhesin P1 family.

The protein is Putative adhesin P1-like protein MPN_099 of Mycoplasma pneumoniae (strain ATCC 29342 / M129 / Subtype 1) (Mycoplasmoides pneumoniae).